A 221-amino-acid chain; its full sequence is Protein GrpE 1 (221 aa).

2 disordered regions span residues 1–44 and 192–221; these read MTEE…AAAQ and VAEPQPGAQTVKADEAEAADDKESGGPEEG. The segment covering 26 to 44 has biased composition (low complexity); that stretch reads KAAPSEGAAPAGDAAAAAQ. Basic and acidic residues predominate over residues 203–221; sequence KADEAEAADDKESGGPEEG.

This sequence belongs to the GrpE family. As to quaternary structure, homodimer.

It localises to the cytoplasm. Its function is as follows. Participates actively in the response to hyperosmotic and heat shock by preventing the aggregation of stress-denatured proteins, in association with DnaK and GrpE. It is the nucleotide exchange factor for DnaK and may function as a thermosensor. Unfolded proteins bind initially to DnaJ; upon interaction with the DnaJ-bound protein, DnaK hydrolyzes its bound ATP, resulting in the formation of a stable complex. GrpE releases ADP from DnaK; ATP binding to DnaK triggers the release of the substrate protein, thus completing the reaction cycle. Several rounds of ATP-dependent interactions between DnaJ, DnaK and GrpE are required for fully efficient folding. This is Protein GrpE 1 from Streptomyces avermitilis (strain ATCC 31267 / DSM 46492 / JCM 5070 / NBRC 14893 / NCIMB 12804 / NRRL 8165 / MA-4680).